Here is a 55-residue protein sequence, read N- to C-terminus: Probable Rubredoxin-2 (55 aa).

One can recognise a Rubredoxin-like domain in the interval 4 to 54 (MARYQCMCGWVYDEDKGEPSQNIPPGTKFEDLPDTFRCPQCGLGKNAFRKI). Fe cation is bound by residues C9, C11, C41, and C44.

It belongs to the rubredoxin family. The cofactor is Fe(3+).

In terms of biological role, rubredoxin is a small nonheme, iron protein lacking acid-labile sulfide. Its single Fe, chelated to 4 Cys, functions as an electron acceptor and may also stabilize the conformation of the molecule. This Methanocaldococcus jannaschii (strain ATCC 43067 / DSM 2661 / JAL-1 / JCM 10045 / NBRC 100440) (Methanococcus jannaschii) protein is Probable Rubredoxin-2.